Here is a 433-residue protein sequence, read N- to C-terminus: Homogentisate 1,2-dioxygenase (433 aa).

Residue H288 is the Proton acceptor of the active site. Residues H331 and E337 each coordinate Fe cation. 2 residues coordinate homogentisate: Y346 and H367. H367 is a Fe cation binding site.

This sequence belongs to the homogentisate dioxygenase family. Hexamer; dimer of trimers. Requires Fe cation as cofactor.

The catalysed reaction is homogentisate + O2 = 4-maleylacetoacetate + H(+). It participates in amino-acid degradation; L-phenylalanine degradation; acetoacetate and fumarate from L-phenylalanine: step 4/6. Functionally, involved in the catabolism of homogentisate (2,5-dihydroxyphenylacetate or 2,5-OH-PhAc), a central intermediate in the degradation of phenylalanine and tyrosine. Catalyzes the oxidative ring cleavage of the aromatic ring of homogentisate to yield maleylacetoacetate. The polypeptide is Homogentisate 1,2-dioxygenase (Pseudomonas entomophila (strain L48)).